The primary structure comprises 515 residues: 2-isopropylmalate synthase (515 aa).

In terms of domain architecture, Pyruvate carboxyltransferase spans 5-268; the sequence is VIIFDTTLRD…VCGIDATQIV (264 aa). The Mn(2+) site is built by D14, H202, H204, and N239. The segment at 394 to 515 is regulatory domain; sequence KFISLSQHSE…QAKLNAQMTP (122 aa).

This sequence belongs to the alpha-IPM synthase/homocitrate synthase family. LeuA type 1 subfamily. In terms of assembly, homodimer. Requires Mn(2+) as cofactor.

It is found in the cytoplasm. It carries out the reaction 3-methyl-2-oxobutanoate + acetyl-CoA + H2O = (2S)-2-isopropylmalate + CoA + H(+). It functions in the pathway amino-acid biosynthesis; L-leucine biosynthesis; L-leucine from 3-methyl-2-oxobutanoate: step 1/4. Functionally, catalyzes the condensation of the acetyl group of acetyl-CoA with 3-methyl-2-oxobutanoate (2-ketoisovalerate) to form 3-carboxy-3-hydroxy-4-methylpentanoate (2-isopropylmalate). The protein is 2-isopropylmalate synthase of Polynucleobacter necessarius subsp. necessarius (strain STIR1).